A 762-amino-acid chain; its full sequence is Endonuclease MutS2 (762 aa).

ATP is bound at residue 333-340 (GVNAGGKT). The region spanning 688 to 762 (LDLRGQRSEE…GGSGVKIVKL (75 aa)) is the Smr domain.

Belongs to the DNA mismatch repair MutS family. MutS2 subfamily. Homodimer. Binds to stalled ribosomes, contacting rRNA.

Functionally, endonuclease that is involved in the suppression of homologous recombination and thus may have a key role in the control of bacterial genetic diversity. Its function is as follows. Acts as a ribosome collision sensor, splitting the ribosome into its 2 subunits. Detects stalled/collided 70S ribosomes which it binds and splits by an ATP-hydrolysis driven conformational change. Acts upstream of the ribosome quality control system (RQC), a ribosome-associated complex that mediates the extraction of incompletely synthesized nascent chains from stalled ribosomes and their subsequent degradation. Probably generates substrates for RQC. The protein is Endonuclease MutS2 of Helicobacter pylori (strain J99 / ATCC 700824) (Campylobacter pylori J99).